The following is a 456-amino-acid chain: Bifunctional protein GlmU (456 aa).

A pyrophosphorylase region spans residues 1–229 (MSNRPMSVVI…TTETDGVNNR (229 aa)). Residues 11–14 (LAAG), Lys-25, Gln-76, 81–82 (GT), 103–105 (YGD), Gly-140, Glu-154, Asn-169, and Asn-227 each bind UDP-N-acetyl-alpha-D-glucosamine. Asp-105 contributes to the Mg(2+) binding site. Asn-227 contacts Mg(2+). The interval 230-250 (LQLATLERVYQAEQAEKLLLS) is linker. The segment at 251–456 (GVMLQDPARF…ASWQRPQKKK (206 aa)) is N-acetyltransferase. Residues Arg-333 and Lys-351 each contribute to the UDP-N-acetyl-alpha-D-glucosamine site. His-363 (proton acceptor) is an active-site residue. UDP-N-acetyl-alpha-D-glucosamine contacts are provided by Tyr-366 and Asn-377. Acetyl-CoA-binding positions include Ala-380, 386 to 387 (NY), Ser-405, Ala-423, and Arg-440.

In the N-terminal section; belongs to the N-acetylglucosamine-1-phosphate uridyltransferase family. The protein in the C-terminal section; belongs to the transferase hexapeptide repeat family. Homotrimer. The cofactor is Mg(2+).

Its subcellular location is the cytoplasm. The enzyme catalyses alpha-D-glucosamine 1-phosphate + acetyl-CoA = N-acetyl-alpha-D-glucosamine 1-phosphate + CoA + H(+). The catalysed reaction is N-acetyl-alpha-D-glucosamine 1-phosphate + UTP + H(+) = UDP-N-acetyl-alpha-D-glucosamine + diphosphate. The protein operates within nucleotide-sugar biosynthesis; UDP-N-acetyl-alpha-D-glucosamine biosynthesis; N-acetyl-alpha-D-glucosamine 1-phosphate from alpha-D-glucosamine 6-phosphate (route II): step 2/2. It functions in the pathway nucleotide-sugar biosynthesis; UDP-N-acetyl-alpha-D-glucosamine biosynthesis; UDP-N-acetyl-alpha-D-glucosamine from N-acetyl-alpha-D-glucosamine 1-phosphate: step 1/1. It participates in bacterial outer membrane biogenesis; LPS lipid A biosynthesis. In terms of biological role, catalyzes the last two sequential reactions in the de novo biosynthetic pathway for UDP-N-acetylglucosamine (UDP-GlcNAc). The C-terminal domain catalyzes the transfer of acetyl group from acetyl coenzyme A to glucosamine-1-phosphate (GlcN-1-P) to produce N-acetylglucosamine-1-phosphate (GlcNAc-1-P), which is converted into UDP-GlcNAc by the transfer of uridine 5-monophosphate (from uridine 5-triphosphate), a reaction catalyzed by the N-terminal domain. In Erwinia tasmaniensis (strain DSM 17950 / CFBP 7177 / CIP 109463 / NCPPB 4357 / Et1/99), this protein is Bifunctional protein GlmU.